The following is a 278-amino-acid chain: Cation-dependent mannose-6-phosphate receptor (278 aa).

The first 21 residues, 1–21, serve as a signal peptide directing secretion; sequence MFPLSGCWRTELLLLLLLAVA. The Lumenal portion of the chain corresponds to 22–188; sequence VRESWQIEEK…ACSPEVSHLS (167 aa). The MRH domain occupies 31 to 182; the sequence is KSCDLVGEKD…EMDSSLACSP (152 aa). Cys33 and Cys79 are oxidised to a cystine. N-linked (GlcNAc...) asparagine glycans are attached at residues Asn58, Asn84, Asn95, Asn108, and Asn114. Cystine bridges form between Cys133–Cys168 and Cys146–Cys180. The chain crosses the membrane as a helical span at residues 189–209; it reads VGSILLVIFASLVAVYIIGGF. Topologically, residues 210-278 are cytoplasmic; it reads LYQRLVVGAK…EERDDHLLPM (69 aa). The disordered stretch occupies residues 256 to 278; sequence YRGVGDDQLGEESEERDDHLLPM. A Phosphoserine modification is found at Ser268.

In terms of assembly, homodimer. Binds GGA1, GGA2 and GGA3.

It localises to the lysosome membrane. Functionally, transport of phosphorylated lysosomal enzymes from the Golgi complex and the cell surface to lysosomes. Lysosomal enzymes bearing phosphomannosyl residues bind specifically to mannose-6-phosphate receptors in the Golgi apparatus and the resulting receptor-ligand complex is transported to an acidic prelyosomal compartment where the low pH mediates the dissociation of the complex. This Rattus norvegicus (Rat) protein is Cation-dependent mannose-6-phosphate receptor (M6pr).